The following is a 607-amino-acid chain: MNKEERAKRQSKIRNFSIIAHIDHGKSTLADRILEKTNALAQREMKAQLLDSMELERERGITIKLNAVQLTYKAKDGEEYILHLIDTPGHVDFTYEVSRSLAACEGAILVVDAAQGIEAQTLANVYLALDNNLEILPVINKIDLPSADPERVRQEVEDVIGLDASEAVLASAKAGIGIEDILEQIVEKVPAPTGDSEEPLQCMIFDSLYDPYRGVIAYIRVVNGTVKVGDKVRMMATGKEFEVTEVGVFTPKTTQRDELTVGDVGFLAASIKNVGDTRVGDTITHAKRPAAEPLKGYRKLNPMVFCGLYPIDSARYNDLRDALEKLELNDSALEFEPETSQALGFGFRCGFLGLLHMEIIQERIEREFKIDLITTAPSVIYKVYLTNGEDFIVDNPSNMPDPQTIDRVEEPFVKAAIMVPNDYVGAVMEICQGKRGTFIDMQYLDETRVTLTYEIPLSEIVYDFFDQLKSNTKGYASFDYELIGYKPSKLVKMDILLNNEQVDALSFIVHRDSAYDRGKVIVEKLKKLIPRQQFEVPIQATIGNKVVSRSTIKAMRKNVLAKCYGGDISRKRKLLDKQKEGKKRMKSVGSVEVPQEAFMAVLKMDDN.

The tr-type G domain occupies 11–193; sequence SKIRNFSIIA…QIVEKVPAPT (183 aa). GTP-binding positions include 23–28 and 140–143; these read DHGKST and NKID.

Belongs to the TRAFAC class translation factor GTPase superfamily. Classic translation factor GTPase family. LepA subfamily.

The protein localises to the cell membrane. The catalysed reaction is GTP + H2O = GDP + phosphate + H(+). In terms of biological role, required for accurate and efficient protein synthesis under certain stress conditions. May act as a fidelity factor of the translation reaction, by catalyzing a one-codon backward translocation of tRNAs on improperly translocated ribosomes. Back-translocation proceeds from a post-translocation (POST) complex to a pre-translocation (PRE) complex, thus giving elongation factor G a second chance to translocate the tRNAs correctly. Binds to ribosomes in a GTP-dependent manner. The protein is Elongation factor 4 of Bacillus mycoides (strain KBAB4) (Bacillus weihenstephanensis).